The following is a 24-amino-acid chain: Small ribosomal subunit protein uS19c (24 aa).

The protein belongs to the universal ribosomal protein uS19 family.

It localises to the plastid. The protein resides in the chloroplast. Protein S19 forms a complex with S13 that binds strongly to the 16S ribosomal RNA. The chain is Small ribosomal subunit protein uS19c (rps19) from Petunia hybrida (Petunia).